The following is a 1512-amino-acid chain: Zinc finger protein 608 (1512 aa).

Disordered regions lie at residues 1 to 23, 46 to 74, 89 to 237, 260 to 295, and 417 to 545; these read MSVNISTAGKGVDPNTVDTYDSG, QKFEMNNSTTTTSSSNSKDCGGPASSGAG, QASA…HLYG, VAAAGEVSKSAPDSGLMGNSMLVKKEEEEEESHRRI, and RFCE…FLDQ. Composition is skewed to low complexity over residues 51-74 and 151-185; these read NNSTTTTSSSNSKDCGGPASSGAG and SALGQSVSSGGSGNPNSNSTSTSTSAATAGAGSCG. Residues 201 to 218 show a composition bias toward basic and acidic residues; that stretch reads AKRDKDAGKSRKDKHDLL. A compositionally biased stretch (polar residues) spans 220–230; the sequence is GHQNGSGSQAP. Positions 260 to 270 are enriched in low complexity; that stretch reads VAAAGEVSKSA. A coiled-coil region spans residues 278–304; the sequence is NSMLVKKEEEEEESHRRIKKLKTEKVD. Lysine 283 is covalently cross-linked (Glycyl lysine isopeptide (Lys-Gly) (interchain with G-Cter in SUMO2)). Residues serine 421 and serine 424 each carry the phosphoserine modification. Residues 449–458 are compositionally biased toward polar residues; sequence ASFTESRGLQ. Threonine 481 bears the Phosphothreonine mark. A Phosphoserine modification is found at serine 493. Residues 526 to 535 show a composition bias toward polar residues; it reads NSRSTPTTPQ. A C2H2-type zinc finger spans residues 553 to 578; sequence IDCPHPNCNKKYKHINGLRYHQAHAH. Disordered regions lie at residues 622-665, 713-750, and 777-858; these read LKAP…KKKG, DKEKGKKATNCKTDKNLSKLKSARPIAPAPAPTPPQLI, and QATP…KDHL. The residue at position 627 (serine 627) is a Phosphoserine. The segment covering 713–729 has biased composition (basic and acidic residues); it reads DKEKGKKATNCKTDKNL. Residues 781–790 are compositionally biased toward pro residues; the sequence is KSPPLKPIQP. Serine 782 bears the Phosphoserine mark. Residues 818 to 858 show a composition bias toward basic and acidic residues; that stretch reads KLKDKEGKETGSPKMDAKLGKLEDSKGASKDLPGHFLKDHL. Lysine 880 participates in a covalent cross-link: Glycyl lysine isopeptide (Lys-Gly) (interchain with G-Cter in SUMO2). At serine 895 the chain carries Phosphoserine. Residues 925 to 934 show a composition bias toward polar residues; the sequence is NGAESSAAKT. Disordered stretches follow at residues 925–996 and 1011–1066; these read NGAE…HSPY and PGQV…HQSV. The segment covering 960-973 has biased composition (low complexity); sequence SKASSPSDIISSKD. Serine 964 is subject to Phosphoserine. Residues 979 to 989 show a composition bias toward polar residues; the sequence is HSSTTAQSSQL. Over residues 1030 to 1054 the composition is skewed to basic and acidic residues; that stretch reads IKKESEEDAEKKDKAEQLDSKKVDH. Positions 1055–1066 are enriched in polar residues; it reads NSASLQPQHQSV. Serine 1098 carries the phosphoserine modification. The interval 1117–1192 is disordered; sequence QKMAQTGRGD…SQLLSNHQQQ (76 aa). Lysine 1118 participates in a covalent cross-link: Glycyl lysine isopeptide (Lys-Gly) (interchain with G-Cter in SUMO2). Residues 1125-1145 show a composition bias toward basic and acidic residues; sequence GDCERKSELPLKELGKEETKQ. The segment covering 1146–1157 has biased composition (polar residues); it reads KNMPSATISKAP. Glycyl lysine isopeptide (Lys-Gly) (interchain with G-Cter in SUMO2) cross-links involve residues lysine 1176 and lysine 1182. The segment covering 1183-1192 has biased composition (low complexity); that stretch reads SQLLSNHQQQ. Glycyl lysine isopeptide (Lys-Gly) (interchain with G-Cter in SUMO2) cross-links involve residues lysine 1199, lysine 1216, lysine 1234, and lysine 1250. A disordered region spans residues 1220–1335; the sequence is DSMKQTGVDP…RGTRVAVSSP (116 aa). Residues 1231-1241 are compositionally biased toward basic and acidic residues; sequence SRFKQDPDSRT. Basic and acidic residues-rich tracts occupy residues 1253–1276 and 1291–1327; these read DQQKSEELDREKKLKEDSPRKTPN and IKEEPKEAKHPDSQSMEESKLKNDDRKTPVNWKDSRG. Residues lysine 1292, lysine 1310, and lysine 1414 each participate in a glycyl lysine isopeptide (Lys-Gly) (interchain with G-Cter in SUMO2) cross-link. Residues 1423–1459 are disordered; that stretch reads ANQYRSKSPAPVEKATAEREREAERERDRHSPFGQRH. Residues 1437–1453 show a composition bias toward basic and acidic residues; it reads ATAEREREAERERDRHS.

Functionally, transcription factor, which represses ZNF609 transcription. This chain is Zinc finger protein 608 (ZNF608), found in Homo sapiens (Human).